Consider the following 81-residue polypeptide: Acyl carrier protein (81 aa).

The Carrier domain maps to 4-79 (DEVYSRVRKI…DAVNYILSKK (76 aa)). Position 39 is an O-(pantetheine 4'-phosphoryl)serine (Ser-39).

It belongs to the acyl carrier protein (ACP) family. Post-translationally, 4'-phosphopantetheine is transferred from CoA to a specific serine of apo-ACP by AcpS. This modification is essential for activity because fatty acids are bound in thioester linkage to the sulfhydryl of the prosthetic group.

Its subcellular location is the cytoplasm. It participates in lipid metabolism; fatty acid biosynthesis. Its function is as follows. Carrier of the growing fatty acid chain in fatty acid biosynthesis. The protein is Acyl carrier protein of Synechococcus sp. (strain JA-3-3Ab) (Cyanobacteria bacterium Yellowstone A-Prime).